We begin with the raw amino-acid sequence, 578 residues long: Probable ATP-dependent RNA helicase DDX55 homolog (578 aa).

The short motif at 7–37 is the Q motif element; that stretch reads PVALKTFREKLGPELLEVFDKSYKSFTDVQV. A Helicase ATP-binding domain is found at 40–218; sequence GTHLLNLSDV…VFGLRNAKQV (179 aa). Residue 53–60 participates in ATP binding; sequence SPTGSGKT. The DEAD box signature appears at 166–169; that stretch reads DEAD. One can recognise a Helicase C-terminal domain in the interval 231-393; the sequence is TLKNYYVECR…EIKVPTNNSR (163 aa). Positions 507 to 557 are disordered; that stretch reads AAKDKKRREKEARKLKKMGGRFRNGGGTGRKAEEKKALKRKAEEEDDAQND. The span at 510–526 shows a compositional bias: basic residues; that stretch reads DKKRREKEARKLKKMGG. Residues 536–549 show a composition bias toward basic and acidic residues; sequence RKAEEKKALKRKAE.

Belongs to the DEAD box helicase family. DDX55/SPB4 subfamily.

The enzyme catalyses ATP + H2O = ADP + phosphate + H(+). Functionally, probable ATP-binding RNA helicase. The protein is Probable ATP-dependent RNA helicase DDX55 homolog of Caenorhabditis elegans.